Reading from the N-terminus, the 67-residue chain is Lantibiotic Flvbeta.b (67 aa).

A propeptide spans 1 to 34 (cleaved by FlvT); it reads MDNNTKLQKLYEQLAATGSEKELDAMLDENMAGA. Ser-36 carries the post-translational modification 2,3-didehydroalanine (Ser); by FlvM2. A 2,3-didehydrobutyrine; by FlvM2 mark is found at Thr-39 and Thr-43. Cross-links (beta-methyllanthionine (Thr-Cys); by FlvM2) lie at residues 50–56, 58–61, and 62–65; these read TTGFDWC, TGAC, and TYSC.

Post-translationally, contains DL-beta-methyllanthionine, when coepressed in E.coli with the flavecin synthetase FlvM2.

Its subcellular location is the secreted. In terms of biological role, lanthionine-containing peptide antibiotic (lantibiotic) only active on Gram-positive bacteria in synergy with Flvalpha.a. Is not active in absence of Flvalpha.a, which is encoded by the same operon than Flvbeta.b. The bactericidal activity of lantibiotics is based on depolarization of energized bacterial cytoplasmic membranes, initiated by the formation of aqueous transmembrane pores. This chain is Lantibiotic Flvbeta.b, found in Ruminococcus flavefaciens.